We begin with the raw amino-acid sequence, 306 residues long: MEVTFFGTSAGLPTKERNTQAIALNLEPYSNSIWLFDVGEGTQHQILHHAIKLGKVTHIFITHMHGDHIFGLPGLLSSRSFQGGEQKPLTLVGPKGIKAYVEMSMNLSESHLNYPITYIEIDDHLTYHHDGFTVEAHLLNHGVPSYGYRVMAPETTGTINVEALKNIGLEPGPKYQEVKSHDTFEHNGQVYQSKDFRGESKQGPVVAIFGDTKPCSNERVISRDADVMVHEATYIDGEKHLANNYHHSHIEDVFALIKEANVKRTLITHLSNRYNTEDINEIYQTLIQNEDTPNFNFVKDFDSFKV.

7 residues coordinate Zn(2+): H63, H65, D67, H68, H141, D211, and H269. Catalysis depends on D67, which acts as the Proton acceptor.

The protein belongs to the RNase Z family. In terms of assembly, homodimer. The cofactor is Zn(2+).

The enzyme catalyses Endonucleolytic cleavage of RNA, removing extra 3' nucleotides from tRNA precursor, generating 3' termini of tRNAs. A 3'-hydroxy group is left at the tRNA terminus and a 5'-phosphoryl group is left at the trailer molecule.. In terms of biological role, zinc phosphodiesterase, which displays some tRNA 3'-processing endonuclease activity. Probably involved in tRNA maturation, by removing a 3'-trailer from precursor tRNA. In Staphylococcus aureus (strain MSSA476), this protein is Ribonuclease Z.